Reading from the N-terminus, the 192-residue chain is NF-kappa-B inhibitor-interacting Ras-like protein 1 (192 aa).

Residue 11–18 participates in GTP binding; sequence GLLSVGKT. The short motif at 35–43 is the Effector region element; the sequence is DCETLEDVY. The interval 58–93 is interactions with NFKBIA and NFKBIB; it reads HLYDTRGLQKGVELPKHYFSFADGFVLVYSVNNLES. Residues 61 to 65 and 120 to 123 each bind GTP; these read DTRGL and NKLD. Positions 168–192 are disordered; that stretch reads LSQPQSKSSFPLPGRKNKGNSNPEN.

The protein belongs to the small GTPase superfamily. Ras family. KappaB-Ras subfamily. In terms of assembly, interacts with both NF-kappa-B inhibitor alpha (NFKBIA) and beta (NFKBIB) in vitro. However, it probably only interacts with NFKBIB in vivo. Forms a complex with NFKBIB and NF-kappa-B heterodimer (p50/NFKB1 and p65/RELA). Also interacts with c-Rel (REL).

It is found in the cytoplasm. Atypical Ras-like protein that acts as a potent regulator of NF-kappa-B activity by preventing the degradation of NF-kappa-B inhibitor beta (NFKBIB) by most signals, explaining why NFKBIB is more resistant to degradation. May act by blocking phosphorylation of NFKBIB and mediating cytoplasmic retention of p65/RELA NF-kappa-B subunit. It is unclear whether it acts as a GTPase. Both GTP- and GDP-bound forms block phosphorylation of NFKBIB. The sequence is that of NF-kappa-B inhibitor-interacting Ras-like protein 1 (Nkiras1) from Mus musculus (Mouse).